Here is a 391-residue protein sequence, read N- to C-terminus: Nucleosome assembly protein 1-like 1 (391 aa).

The segment covering 1–10 (MADIDNKEQS) has biased composition (basic and acidic residues). The disordered stretch occupies residues 1–32 (MADIDNKEQSELDQDLEDVEEVEEEETGEETK). Residue Ala-2 is modified to N-acetylalanine. Residue Ser-10 is modified to Phosphoserine. The segment covering 11 to 28 (ELDQDLEDVEEVEEEETG) has biased composition (acidic residues). Phosphothreonine occurs at positions 62 and 64. The residue at position 69 (Ser-69) is a Phosphoserine. N6-acetyllysine is present on Lys-116. Positions 125–150 (YEPTEEECEWKPDEEDEVSEELKEKA) match the NAP1L motif motif. Positions 131–143 (ECEWKPDEEDEVS) are enriched in acidic residues. Residues 131–163 (ECEWKPDEEDEVSEELKEKAKIEDEKKDEEKED) are disordered. Ser-143 bears the Phosphoserine mark. Over residues 144–163 (EELKEKAKIEDEKKDEEKED) the composition is skewed to basic and acidic residues. The Nuclear localization signal signature appears at 273–279 (IKKKQKH). A compositionally biased stretch (acidic residues) spans 346–376 (AIEDDDDDYDEEGEEADEEGEEEGDEENDPD). Residues 346–391 (AIEDDDDDYDEEGEEADEEGEEEGDEENDPDYDPKKDQNPAECKQQ) form a disordered region. Residues Glu-359 and Glu-360 each carry the 5-glutamyl polyglycine modification. Basic and acidic residues predominate over residues 377–391 (YDPKKDQNPAECKQQ). A Cysteine methyl ester modification is found at Cys-388. Cys-388 carries the S-farnesyl cysteine lipid modification. Residues 389 to 391 (KQQ) constitute a propeptide, removed in mature form.

The protein belongs to the nucleosome assembly protein (NAP) family. As to quaternary structure, homodimer. The dimer binds strongly and sequentially to single and double H2A-H2B heterodimers. Interacts with ERCC6; this interaction increases ERCC6 processivity. Interacts with RAD54. Interacts with SETD1A. In terms of processing, polyglycylated by TTLL10 on glutamate residues, resulting in polyglycine chains on the gamma-carboxyl group. Both polyglutamylation and polyglycylation modifications can coexist on the same protein on adjacent residues, and lowering polyglycylation levels increases polyglutamylation, and reciprocally. Post-translationally, polyglutamylated by TTLL4 on glutamate residues, resulting in polyglutamate chains on the gamma-carboxyl group. Both polyglutamylation and polyglycylation modifications can coexist on the same protein on adjacent residues, and lowering polyglycylation levels increases polyglutamylation, and reciprocally. As to expression, highly expressed in the brain (at protein level). High expression in cerebral cortex, not in cerebellar cortex.

It localises to the nucleus. The protein resides in the cytoplasm. The protein localises to the melanosome. Histone chaperone that plays a role in the nuclear import of H2A-H2B and nucleosome assembly. Also participates in several important DNA repair mechanisms: greatly enhances ERCC6-mediated chromatin remodeling which is essential for transcription-coupled nucleotide excision DNA repair. Also stimulates homologous recombination (HR) by RAD51 and RAD54 which is essential in mitotic DNA double strand break (DSB) repair. Plays a key role in the regulation of embryonic neurogenesis. Promotes the proliferation of neural progenitors and inhibits neuronal differentiation during cortical development. Regulates neurogenesis via the modulation of RASSF10; regulates RASSF10 expression by promoting SETD1A-mediated H3K4 methylation at the RASSF10 promoter. This Mus musculus (Mouse) protein is Nucleosome assembly protein 1-like 1 (Nap1l1).